We begin with the raw amino-acid sequence, 121 residues long: Large ribosomal subunit protein uL18 (121 aa).

It belongs to the universal ribosomal protein uL18 family. As to quaternary structure, part of the 50S ribosomal subunit; part of the 5S rRNA/L5/L18/L25 subcomplex. Contacts the 5S and 23S rRNAs.

Its function is as follows. This is one of the proteins that bind and probably mediate the attachment of the 5S RNA into the large ribosomal subunit, where it forms part of the central protuberance. This is Large ribosomal subunit protein uL18 from Methylibium petroleiphilum (strain ATCC BAA-1232 / LMG 22953 / PM1).